The sequence spans 255 residues: Carboxy-S-adenosyl-L-methionine synthase (255 aa).

S-adenosyl-L-methionine contacts are provided by residues Tyr-45, 70–72 (GCS), 124–125 (DI), and Asn-139.

The protein belongs to the class I-like SAM-binding methyltransferase superfamily. Cx-SAM synthase family. As to quaternary structure, homodimer.

The catalysed reaction is prephenate + S-adenosyl-L-methionine = carboxy-S-adenosyl-L-methionine + 3-phenylpyruvate + H2O. Functionally, catalyzes the conversion of S-adenosyl-L-methionine (SAM) to carboxy-S-adenosyl-L-methionine (Cx-SAM). This chain is Carboxy-S-adenosyl-L-methionine synthase, found in Hamiltonella defensa subsp. Acyrthosiphon pisum (strain 5AT).